The following is a 56-amino-acid chain: UPF0391 membrane protein HCH_04387 (56 aa).

2 helical membrane passes run 6–26 (IVFF…IAAA) and 30–50 (IAQI…IAGG).

It belongs to the UPF0391 family.

The protein resides in the cell membrane. The protein is UPF0391 membrane protein HCH_04387 of Hahella chejuensis (strain KCTC 2396).